The sequence spans 225 residues: Cardiotrophin-like cytokine factor 1 (225 aa).

The signal sequence occupies residues 1 to 27 (MDLRAGDSWGMLACLCTVLWHLPAVPA). Asn-29 is a glycosylation site (N-linked (GlcNAc...) asparagine).

Belongs to the IL-6 superfamily. Forms a heteromeric complex with cardiotrophin-like cytokine CRLF1/CLF-1; the CRLF1-CLCF1 complex is a ligand for the ciliary neurotrophic factor receptor/CNTFR. The CRLF1-CLCF1 heterodimer binds SORL1 (via N-terminal ectodomain); within this complex, the interaction is mediated predominantly by the CRLF1 moiety. The tripartite signaling complex formed by CRLF1, CLCF1 and CNTFR also binds SORL1. In terms of tissue distribution, expressed predominantly in lymph nodes, spleen, peripheral blood lymphocytes, bone marrow, and fetal liver.

It is found in the secreted. In terms of biological role, in complex with CRLF1, forms a heterodimeric neurotropic cytokine that plays a crucial role during neuronal development. Also stimulates B-cells. Binds to and activates the ILST/gp130 receptor. The sequence is that of Cardiotrophin-like cytokine factor 1 (CLCF1) from Homo sapiens (Human).